The chain runs to 96 residues: NADH-quinone oxidoreductase subunit K (96 aa).

3 helical membrane passes run 1-21 (MNYI…VLVR), 25-45 (IIVF…FVAF), and 56-76 (VIAF…LAII).

Belongs to the complex I subunit 4L family. As to quaternary structure, NDH-1 is composed of 14 different subunits. Subunits NuoA, H, J, K, L, M, N constitute the membrane sector of the complex.

The protein resides in the cell membrane. It carries out the reaction a quinone + NADH + 5 H(+)(in) = a quinol + NAD(+) + 4 H(+)(out). Its function is as follows. NDH-1 shuttles electrons from NADH, via FMN and iron-sulfur (Fe-S) centers, to quinones in the respiratory chain. The immediate electron acceptor for the enzyme in this species is believed to be a menaquinone. Couples the redox reaction to proton translocation (for every two electrons transferred, four hydrogen ions are translocated across the cytoplasmic membrane), and thus conserves the redox energy in a proton gradient. In Thermobifida fusca (strain YX), this protein is NADH-quinone oxidoreductase subunit K.